Consider the following 360-residue polypeptide: Pyrimidine monooxygenase RutA (360 aa).

Residues 49 to 50, Asn115, Glu124, 140 to 141, and Ser190 contribute to the FMN site; these read IK and RY.

Belongs to the NtaA/SnaA/DszA monooxygenase family. RutA subfamily.

It catalyses the reaction uracil + FMNH2 + NADH + O2 = (Z)-3-ureidoacrylate + FMN + NAD(+) + H2O + H(+). It carries out the reaction thymine + FMNH2 + NADH + O2 = (Z)-2-methylureidoacrylate + FMN + NAD(+) + H2O + H(+). Its function is as follows. Catalyzes the pyrimidine ring opening between N-3 and C-4 by an unusual flavin hydroperoxide-catalyzed mechanism, adding oxygen atoms in the process to yield ureidoacrylate peracid, that immediately reacts with FMN forming ureidoacrylate and FMN-N(5)-oxide. The FMN-N(5)-oxide reacts spontaneously with NADH to produce FMN. Requires the flavin reductase RutF to regenerate FMN in vivo. The sequence is that of Pyrimidine monooxygenase RutA from Pseudomonas syringae pv. syringae (strain B728a).